A 318-amino-acid polypeptide reads, in one-letter code: Ribose-phosphate pyrophosphokinase 3 (318 aa).

R96–D101 is a binding site for ATP. The Mg(2+) site is built by D128, H130, D139, and D143. H130 is an ATP binding site. The segment at N212–V227 is binding of phosphoribosylpyrophosphate.

The protein belongs to the ribose-phosphate pyrophosphokinase family. As to quaternary structure, homodimer. The active form is probably a hexamer composed of 3 homodimers. The cofactor is Mg(2+). Testis.

It carries out the reaction D-ribose 5-phosphate + ATP = 5-phospho-alpha-D-ribose 1-diphosphate + AMP + H(+). The protein operates within metabolic intermediate biosynthesis; 5-phospho-alpha-D-ribose 1-diphosphate biosynthesis; 5-phospho-alpha-D-ribose 1-diphosphate from D-ribose 5-phosphate (route I): step 1/1. Its activity is regulated as follows. Activated by magnesium and inorganic phosphate. Catalyzes the synthesis of phosphoribosylpyrophosphate (PRPP) that is essential for nucleotide synthesis. The polypeptide is Ribose-phosphate pyrophosphokinase 3 (PRPS1L1) (Homo sapiens (Human)).